Reading from the N-terminus, the 322-residue chain is Elongation factor P--(R)-beta-lysine ligase (322 aa).

72–74 (SPE) is a binding site for substrate. Residues 96-98 (RNN) and N106 each bind ATP. A substrate-binding site is contributed by Y115. Position 241–242 (241–242 (EL)) interacts with ATP. E248 contributes to the substrate binding site. G297 lines the ATP pocket.

Belongs to the class-II aminoacyl-tRNA synthetase family. EpmA subfamily. As to quaternary structure, homodimer.

The enzyme catalyses D-beta-lysine + L-lysyl-[protein] + ATP = N(6)-((3R)-3,6-diaminohexanoyl)-L-lysyl-[protein] + AMP + diphosphate + H(+). Its function is as follows. With EpmB is involved in the beta-lysylation step of the post-translational modification of translation elongation factor P (EF-P). Catalyzes the ATP-dependent activation of (R)-beta-lysine produced by EpmB, forming a lysyl-adenylate, from which the beta-lysyl moiety is then transferred to the epsilon-amino group of a conserved specific lysine residue in EF-P. This is Elongation factor P--(R)-beta-lysine ligase from Buchnera aphidicola subsp. Baizongia pistaciae (strain Bp).